A 345-amino-acid chain; its full sequence is Probable dual-specificity RNA methyltransferase RlmN (345 aa).

The active-site Proton acceptor is glutamate 90. The Radical SAM core domain maps to 96 to 326; the sequence is YDYGNSICIS…STIRKEMGAD (231 aa). A disulfide bridge connects residues cysteine 103 and cysteine 331. [4Fe-4S] cluster is bound by residues cysteine 110, cysteine 114, and cysteine 117. S-adenosyl-L-methionine is bound by residues 157–158, serine 189, 212–214, and asparagine 288; these read GE and SLH. Residue cysteine 331 is the S-methylcysteine intermediate of the active site.

This sequence belongs to the radical SAM superfamily. RlmN family. It depends on [4Fe-4S] cluster as a cofactor.

Its subcellular location is the cytoplasm. The catalysed reaction is adenosine(2503) in 23S rRNA + 2 reduced [2Fe-2S]-[ferredoxin] + 2 S-adenosyl-L-methionine = 2-methyladenosine(2503) in 23S rRNA + 5'-deoxyadenosine + L-methionine + 2 oxidized [2Fe-2S]-[ferredoxin] + S-adenosyl-L-homocysteine. The enzyme catalyses adenosine(37) in tRNA + 2 reduced [2Fe-2S]-[ferredoxin] + 2 S-adenosyl-L-methionine = 2-methyladenosine(37) in tRNA + 5'-deoxyadenosine + L-methionine + 2 oxidized [2Fe-2S]-[ferredoxin] + S-adenosyl-L-homocysteine. Functionally, specifically methylates position 2 of adenine 2503 in 23S rRNA and position 2 of adenine 37 in tRNAs. This chain is Probable dual-specificity RNA methyltransferase RlmN, found in Clostridium acetobutylicum (strain ATCC 824 / DSM 792 / JCM 1419 / IAM 19013 / LMG 5710 / NBRC 13948 / NRRL B-527 / VKM B-1787 / 2291 / W).